Reading from the N-terminus, the 166-residue chain is Protein-export protein SecB (166 aa).

It belongs to the SecB family. Homotetramer, a dimer of dimers. One homotetramer interacts with 1 SecA dimer.

It is found in the cytoplasm. Its function is as follows. One of the proteins required for the normal export of preproteins out of the cell cytoplasm. It is a molecular chaperone that binds to a subset of precursor proteins, maintaining them in a translocation-competent state. It also specifically binds to its receptor SecA. This chain is Protein-export protein SecB, found in Acidiphilium cryptum (strain JF-5).